A 473-amino-acid chain; its full sequence is Photosystem II CP43 reaction center protein (473 aa).

A propeptide spanning residues 1–14 is cleaved from the precursor; sequence MKTLYSLRRFYHVE. The residue at position 15 (T15) is an N-acetylthreonine. Position 15 is a phosphothreonine (T15). 5 consecutive transmembrane segments (helical) span residues 69 to 93, 134 to 155, 178 to 200, 255 to 275, and 291 to 312; these read LFEVAHFVPEKPMYEQGLILLPHLA, LLGPETLEESFPFFGYVWKDRN, KALYFGGVYDTWAPGGGDVRKIT, KPFAWARRALVWSGEAYLSYS, and CFNNTAYPSEFYGPTGPEASQA. Residue E367 participates in [CaMn4O5] cluster binding. Residues 447–471 form a helical membrane-spanning segment; that stretch reads RARAAAAGFEKGIDRDFEPVLSMTP.

This sequence belongs to the PsbB/PsbC family. PsbC subfamily. In terms of assembly, PSII is composed of 1 copy each of membrane proteins PsbA, PsbB, PsbC, PsbD, PsbE, PsbF, PsbH, PsbI, PsbJ, PsbK, PsbL, PsbM, PsbT, PsbX, PsbY, PsbZ, Psb30/Ycf12, at least 3 peripheral proteins of the oxygen-evolving complex and a large number of cofactors. It forms dimeric complexes. Binds multiple chlorophylls and provides some of the ligands for the Ca-4Mn-5O cluster of the oxygen-evolving complex. It may also provide a ligand for a Cl- that is required for oxygen evolution. PSII binds additional chlorophylls, carotenoids and specific lipids. is required as a cofactor.

The protein resides in the plastid. It is found in the chloroplast thylakoid membrane. Its function is as follows. One of the components of the core complex of photosystem II (PSII). It binds chlorophyll and helps catalyze the primary light-induced photochemical processes of PSII. PSII is a light-driven water:plastoquinone oxidoreductase, using light energy to abstract electrons from H(2)O, generating O(2) and a proton gradient subsequently used for ATP formation. The chain is Photosystem II CP43 reaction center protein from Jasminum nudiflorum (Winter jasmine).